The chain runs to 177 residues: MAETQTVNPMRKLRLEKVTVNIGVGEAGERLQKAYQLLQELTGVKPVYTIAKRTIREFGVRKGAPIGVKVTLRGKKAEEFLNKVLAAVGHRIKASSFDEYGNVSFGIAEHVLIPGTRYDPEIGIFGMDVAITLVRPGFRVARRRRKKAHIPKRHRTVSKEEAMEFLKQNFNVTIVEG.

It belongs to the universal ribosomal protein uL5 family. As to quaternary structure, part of the 50S ribosomal subunit; contacts the 5S rRNA and probably tRNA. Forms a bridge to the 30S subunit in the 70S ribosome.

Its function is as follows. This is one of the proteins that bind and probably mediate the attachment of the 5S RNA into the large ribosomal subunit, where it forms part of the central protuberance. In the 70S ribosome it contacts protein S13 of the 30S subunit (bridge B1b), connecting the 2 subunits; this bridge is implicated in subunit movement. May contact the P site tRNA; the 5S rRNA and some of its associated proteins might help stabilize positioning of ribosome-bound tRNAs. The chain is Large ribosomal subunit protein uL5 from Sulfurisphaera tokodaii (strain DSM 16993 / JCM 10545 / NBRC 100140 / 7) (Sulfolobus tokodaii).